The chain runs to 120 residues: MEQDINNQTGKKIFLNEECFLELDKLPQHVSVLGVSGFGKSNILLHFLKYAIDNDHPLIFVNGKGDKELITQFEHYQTSAKQLSPEDGFDTVKLVALKNTSAKIWSLDDRIATIKYNPFK.

This is an uncharacterized protein from Mycoplasma pneumoniae (strain ATCC 29342 / M129 / Subtype 1) (Mycoplasmoides pneumoniae).